A 94-amino-acid polypeptide reads, in one-letter code: Integration host factor subunit beta (94 aa).

This sequence belongs to the bacterial histone-like protein family. As to quaternary structure, heterodimer of an alpha and a beta chain.

Functionally, this protein is one of the two subunits of integration host factor, a specific DNA-binding protein that functions in genetic recombination as well as in transcriptional and translational control. The chain is Integration host factor subunit beta (ihfB) from Haemophilus influenzae (strain ATCC 51907 / DSM 11121 / KW20 / Rd).